Here is a 339-residue protein sequence, read N- to C-terminus: MNAPHLLEKILRGERLSSEEAYALAMSIAKNEIDDVQKAGFLVALRCGRERPEELEGFVRALLDLAVKVGPFREAIDTAGTGGDRANLFNVSTAAAVTLAAMGYKVVKHGNRSVTSAAGSADVMEALGYNLNLPPEKATEVFERTGFVYLFAPLYHPAMKNVAHVRKNLGIRTIFNLAGPLSNPARPGYQLVGVSEPWMLDVFAKALKNLGVERAAVVHGRPGIDEVSPTSTTEVYFVDRDKISYSVIDVEDFGAKPLESLEPLKVRDIKEAKEKFLRALRGEFPEAVFLGVNAAMAIHVIDGKDVSEAYLEVVETLARGEAINKLREIIEASGGNPTF.

Residues Gly-80, 83–84, 90–93, 108–116, and Ser-120 each bind 5-phospho-alpha-D-ribose 1-diphosphate; these read GD, NVST, and KHGNRSVTS. Position 80 (Gly-80) interacts with anthranilate. Ser-92 provides a ligand contact to Mg(2+). Residue Asn-111 coordinates anthranilate. Arg-166 provides a ligand contact to anthranilate. Asp-225 and Glu-226 together coordinate Mg(2+).

It belongs to the anthranilate phosphoribosyltransferase family. As to quaternary structure, homodimer. The cofactor is Mg(2+).

The catalysed reaction is N-(5-phospho-beta-D-ribosyl)anthranilate + diphosphate = 5-phospho-alpha-D-ribose 1-diphosphate + anthranilate. Its pathway is amino-acid biosynthesis; L-tryptophan biosynthesis; L-tryptophan from chorismate: step 2/5. In terms of biological role, catalyzes the transfer of the phosphoribosyl group of 5-phosphorylribose-1-pyrophosphate (PRPP) to anthranilate to yield N-(5'-phosphoribosyl)-anthranilate (PRA). This chain is Anthranilate phosphoribosyltransferase, found in Ignicoccus hospitalis (strain KIN4/I / DSM 18386 / JCM 14125).